The following is a 329-amino-acid chain: Chlorophyllase-1, chloroplastic (329 aa).

The transit peptide at 1–21 (MAAMVDAKPAASVQGTPLLAT) directs the protein to the chloroplast. The short motif at 145–149 (GHSRG) is the GXSXG element. Residue Ser147 is the Nucleophile of the active site. Active-site charge relay system residues include Asp169 and His242.

It belongs to the AB hydrolase superfamily. Lipase family.

The protein localises to the plastid. It localises to the chloroplast. The enzyme catalyses a chlorophyll + H2O = a chlorophyllide + phytol + H(+). It participates in porphyrin-containing compound metabolism; chlorophyll degradation. Its function is as follows. Catalyzes the hydrolysis of ester bond in chlorophyll to yield chlorophyllide and phytol. This chain is Chlorophyllase-1, chloroplastic (CHLASE1), found in Citrus sinensis (Sweet orange).